A 250-amino-acid polypeptide reads, in one-letter code: DNA polymerase sliding clamp (250 aa).

It belongs to the PCNA family. Homotrimer. The subunits circularize to form a toroid; DNA passes through its center. Replication factor C (RFC) is required to load the toroid on the DNA.

In terms of biological role, sliding clamp subunit that acts as a moving platform for DNA processing. Responsible for tethering the catalytic subunit of DNA polymerase and other proteins to DNA during high-speed replication. The chain is DNA polymerase sliding clamp from Methanococcus maripaludis (strain C6 / ATCC BAA-1332).